Reading from the N-terminus, the 690-residue chain is Eukaryotic translation initiation factor 3 subunit B (690 aa).

The span at M1–G11 shows a compositional bias: basic and acidic residues. The disordered stretch occupies residues M1–S36. The segment covering N15–F25 has biased composition (acidic residues). One can recognise an RRM domain in the interval S57–D141. 5 WD repeats span residues T207–K246, D293–L331, I334–E369, E442–L484, and P530–T575. Positions E595–R645 form a coiled coil.

This sequence belongs to the eIF-3 subunit B family. As to quaternary structure, component of the eukaryotic translation initiation factor 3 (eIF-3) complex. The eIF-3 complex interacts with pix. Interacts with mxt.

It localises to the cytoplasm. Its function is as follows. RNA-binding component of the eukaryotic translation initiation factor 3 (eIF-3) complex, which is involved in protein synthesis of a specialized repertoire of mRNAs and, together with other initiation factors, stimulates binding of mRNA and methionyl-tRNAi to the 40S ribosome. The eIF-3 complex specifically targets and initiates translation of a subset of mRNAs involved in cell proliferation. In Drosophila simulans (Fruit fly), this protein is Eukaryotic translation initiation factor 3 subunit B.